Here is a 281-residue protein sequence, read N- to C-terminus: Leukocyte antigen CD37 (281 aa).

The Cytoplasmic segment spans residues 1–17 (MSAQESCLSLIKYFLFV). A helical transmembrane segment spans residues 18 to 38 (FNLFFFVLGSLIFCFGIWILI). Over 39–59 (DKTSFVSFVGLAFVPLQIWSK) the chain is Extracellular. Residues 60 to 74 (VLAISGIFTMGIALL) form a helical membrane-spanning segment. The Cytoplasmic segment spans residues 75–85 (GCVGALKELRC). A helical membrane pass occupies residues 86–111 (LLGLYFGMLLLLFATQITLGILISTQ). Topologically, residues 112–241 (RAQLERSLRD…QGLQKWLHNN (130 aa)) are extracellular. N-linked (GlcNAc...) asparagine glycans are attached at residues N170, N183, and N188. Residues 242-266 (LISIVGICLGVGLLELGFMTLSIFL) form a helical membrane-spanning segment. Residues 267-281 (CRNLDHVYNRLARYR) lie on the Cytoplasmic side of the membrane.

The protein belongs to the tetraspanin (TM4SF) family. In terms of assembly, interacts with SCIMP. Interacts with SOCS3. Interacts with DECTIN1/CLEC7A. Post-translationally, tyrosine phosphorylated; leading to activation of downstream signaling pathways. In terms of tissue distribution, B-lymphocytes. Antigen presenting cells.

The protein localises to the cell membrane. Functionally, structural component of specialized membrane microdomains known as tetraspanin-enriched microdomains (TERMs), which act as platforms for receptor clustering and signaling. Participates thereby in diverse biological functions such as cell signal transduction, adhesion, migration and protein trafficking. Upon ligand binding, two signaling pathways are activated, one acting through phosphorylation by LYN leading to cell death or a survival pathway with activation of GSK3B. Plays an essential role essential for clustering of integrin ITGA4/ITGB1 and promotes its mobility in the plasma membrane of B-cells. In turn, participates in ITGA4/ITGB1 integrin-mediated antiapoptotic signaling through AKT. Also plays a role in the migration of dendritic cells and neutrophils to draining lymph nodes, as well as in their integrin-mediated adhesion. Negatively regulates IL-6 responses through direct interaction with SOCS3 thereby preventing constitutive IL-6 signaling. Alternatively, inhibition of IL-6 signaling can also occur via interaction and stabilization of DECTIN1/CLEC7A at the cell membrane to inhibit its ability to promote the production of IL-6. This chain is Leukocyte antigen CD37 (CD37), found in Homo sapiens (Human).